The following is a 206-amino-acid chain: Holliday junction branch migration complex subunit RuvA (206 aa).

The segment at Met1–Val64 is domain I. The segment at Thr65–Ala143 is domain II. The tract at residues Arg144–Ala154 is flexible linker. The tract at residues Ala154 to Lys206 is domain III.

It belongs to the RuvA family. As to quaternary structure, homotetramer. Forms an RuvA(8)-RuvB(12)-Holliday junction (HJ) complex. HJ DNA is sandwiched between 2 RuvA tetramers; dsDNA enters through RuvA and exits via RuvB. An RuvB hexamer assembles on each DNA strand where it exits the tetramer. Each RuvB hexamer is contacted by two RuvA subunits (via domain III) on 2 adjacent RuvB subunits; this complex drives branch migration. In the full resolvosome a probable DNA-RuvA(4)-RuvB(12)-RuvC(2) complex forms which resolves the HJ.

The protein resides in the cytoplasm. The RuvA-RuvB-RuvC complex processes Holliday junction (HJ) DNA during genetic recombination and DNA repair, while the RuvA-RuvB complex plays an important role in the rescue of blocked DNA replication forks via replication fork reversal (RFR). RuvA specifically binds to HJ cruciform DNA, conferring on it an open structure. The RuvB hexamer acts as an ATP-dependent pump, pulling dsDNA into and through the RuvAB complex. HJ branch migration allows RuvC to scan DNA until it finds its consensus sequence, where it cleaves and resolves the cruciform DNA. This Azorhizobium caulinodans (strain ATCC 43989 / DSM 5975 / JCM 20966 / LMG 6465 / NBRC 14845 / NCIMB 13405 / ORS 571) protein is Holliday junction branch migration complex subunit RuvA.